The chain runs to 447 residues: Ribosomal protein uS12 methylthiotransferase RimO (447 aa).

An MTTase N-terminal domain is found at 4 to 114; that stretch reads PKVGFVSLGC…VMEAVHEYVP (111 aa). The [4Fe-4S] cluster site is built by cysteine 13, cysteine 49, cysteine 78, cysteine 147, cysteine 151, and cysteine 154. The Radical SAM core domain occupies 133 to 370; the sequence is LTPKHYAYLK…MQVQQQISAA (238 aa). Residues 373–443 enclose the TRAM domain; sequence QKRIGQTMTV…EYDLFAKLIK (71 aa).

Belongs to the methylthiotransferase family. RimO subfamily. [4Fe-4S] cluster is required as a cofactor.

It localises to the cytoplasm. It carries out the reaction L-aspartate(89)-[ribosomal protein uS12]-hydrogen + (sulfur carrier)-SH + AH2 + 2 S-adenosyl-L-methionine = 3-methylsulfanyl-L-aspartate(89)-[ribosomal protein uS12]-hydrogen + (sulfur carrier)-H + 5'-deoxyadenosine + L-methionine + A + S-adenosyl-L-homocysteine + 2 H(+). Its function is as follows. Catalyzes the methylthiolation of an aspartic acid residue of ribosomal protein uS12. This chain is Ribosomal protein uS12 methylthiotransferase RimO, found in Acinetobacter baumannii (strain AB0057).